Here is a 418-residue protein sequence, read N- to C-terminus: ATP phosphoribosyltransferase regulatory subunit (418 aa).

Belongs to the class-II aminoacyl-tRNA synthetase family. HisZ subfamily. In terms of assembly, heteromultimer composed of HisG and HisZ subunits.

The protein resides in the cytoplasm. It participates in amino-acid biosynthesis; L-histidine biosynthesis; L-histidine from 5-phospho-alpha-D-ribose 1-diphosphate: step 1/9. Functionally, required for the first step of histidine biosynthesis. May allow the feedback regulation of ATP phosphoribosyltransferase activity by histidine. This Acetivibrio thermocellus (strain ATCC 27405 / DSM 1237 / JCM 9322 / NBRC 103400 / NCIMB 10682 / NRRL B-4536 / VPI 7372) (Clostridium thermocellum) protein is ATP phosphoribosyltransferase regulatory subunit.